The following is a 247-amino-acid chain: Small ribosomal subunit protein uS2 (247 aa).

Belongs to the universal ribosomal protein uS2 family.

This chain is Small ribosomal subunit protein uS2, found in Fusobacterium nucleatum subsp. nucleatum (strain ATCC 25586 / DSM 15643 / BCRC 10681 / CIP 101130 / JCM 8532 / KCTC 2640 / LMG 13131 / VPI 4355).